A 376-amino-acid chain; its full sequence is 26S proteasome non-ATPase regulatory subunit 13 (376 aa).

The PCI domain maps to 171 to 338; the sequence is SYYKDALRFL…KRVHMTWVQP (168 aa). Lys-298 is subject to N6-acetyllysine.

This sequence belongs to the proteasome subunit S11 family. As to quaternary structure, component of the 19S proteasome regulatory particle complex. The 26S proteasome consists of a 20S core particle (CP) and two 19S regulatory subunits (RP). The regulatory particle is made of a lid composed of 9 subunits including PSMD13, a base containing 6 ATPases and few additional components.

In terms of biological role, component of the 26S proteasome, a multiprotein complex involved in the ATP-dependent degradation of ubiquitinated proteins. This complex plays a key role in the maintenance of protein homeostasis by removing misfolded or damaged proteins, which could impair cellular functions, and by removing proteins whose functions are no longer required. Therefore, the proteasome participates in numerous cellular processes, including cell cycle progression, apoptosis, or DNA damage repair. The protein is 26S proteasome non-ATPase regulatory subunit 13 (PSMD13) of Homo sapiens (Human).